The chain runs to 69 residues: Toxin Tma2 (69 aa).

The region spanning 2-66 (KDDYPVDTAE…SPTKTSKRCN (65 aa)) is the LCN-type CS-alpha/beta domain. Cystine bridges form between C14–C65, C18–C41, C27–C48, and C31–C50.

It belongs to the long (4 C-C) scorpion toxin superfamily. Sodium channel inhibitor family. In terms of tissue distribution, expressed by the venom gland.

It localises to the secreted. In terms of biological role, inhibits voltage-gated sodium channels (Nav). This toxin shows insect lethality against crickets. This is Toxin Tma2 from Tityus macrochirus (Scorpion).